A 102-amino-acid chain; its full sequence is Large ribosomal subunit protein uL23 (102 aa).

The protein belongs to the universal ribosomal protein uL23 family. Part of the 50S ribosomal subunit. Contacts protein L29, and trigger factor when it is bound to the ribosome.

Its function is as follows. One of the early assembly proteins it binds 23S rRNA. One of the proteins that surrounds the polypeptide exit tunnel on the outside of the ribosome. Forms the main docking site for trigger factor binding to the ribosome. This Chromobacterium violaceum (strain ATCC 12472 / DSM 30191 / JCM 1249 / CCUG 213 / NBRC 12614 / NCIMB 9131 / NCTC 9757 / MK) protein is Large ribosomal subunit protein uL23.